Reading from the N-terminus, the 347-residue chain is NADH-ubiquinone oxidoreductase chain 2 (347 aa).

The next 11 helical transmembrane spans lie at P3–S23, H25–M45, Y59–I79, T96–P116, V122–L142, V149–G169, I178–P198, S201–F221, I239–G259, D274–M294, and M326–L346.

Belongs to the complex I subunit 2 family. In terms of assembly, core subunit of respiratory chain NADH dehydrogenase (Complex I) which is composed of 45 different subunits. Interacts with TMEM242.

Its subcellular location is the mitochondrion inner membrane. It catalyses the reaction a ubiquinone + NADH + 5 H(+)(in) = a ubiquinol + NAD(+) + 4 H(+)(out). In terms of biological role, core subunit of the mitochondrial membrane respiratory chain NADH dehydrogenase (Complex I) which catalyzes electron transfer from NADH through the respiratory chain, using ubiquinone as an electron acceptor. Essential for the catalytic activity and assembly of complex I. The sequence is that of NADH-ubiquinone oxidoreductase chain 2 from Sylvisorex johnstoni (Johnston's forest shrew).